A 559-amino-acid chain; its full sequence is Urocanate hydratase (559 aa).

NAD(+) is bound by residues 53–54, Q131, 177–179, E197, R202, 243–244, 264–268, 274–275, and Y323; these read GG, GMG, NA, QTSAH, and YL. Residue C411 is part of the active site. G493 contacts NAD(+).

The protein belongs to the urocanase family. NAD(+) is required as a cofactor.

It is found in the cytoplasm. The catalysed reaction is 4-imidazolone-5-propanoate = trans-urocanate + H2O. The protein operates within amino-acid degradation; L-histidine degradation into L-glutamate; N-formimidoyl-L-glutamate from L-histidine: step 2/3. Catalyzes the conversion of urocanate to 4-imidazolone-5-propionate. The polypeptide is Urocanate hydratase (Pseudomonas paraeruginosa (strain DSM 24068 / PA7) (Pseudomonas aeruginosa (strain PA7))).